We begin with the raw amino-acid sequence, 242 residues long: Ribosomal RNA small subunit methyltransferase G (242 aa).

Residues Gly79, 130–131 (VE), and Gln149 each bind S-adenosyl-L-methionine.

This sequence belongs to the methyltransferase superfamily. RNA methyltransferase RsmG family.

It is found in the cytoplasm. In terms of biological role, specifically methylates the N7 position of a guanine in 16S rRNA. The sequence is that of Ribosomal RNA small subunit methyltransferase G from Mycoplasmoides gallisepticum (strain R(low / passage 15 / clone 2)) (Mycoplasma gallisepticum).